Here is a 143-residue protein sequence, read N- to C-terminus: Boletus edulis lectin (143 aa).

Beta-D-Gal-(1-&gt;3)-alpha-D-GalNAc contacts are provided by residues alanine 30, 49-50, and 72-73; these read SG and HN. N-acetyl-alpha-D-galactosamine-binding positions include 49–50 and 72–73; these read SG and HN. Residues 79 to 82, arginine 103, and tyrosine 114 each bind N,N'-diacetylchitobiose; that span reads DVVT. N-acetyl-alpha-D-glucosamine-binding positions include 79 to 82, arginine 103, and tyrosine 114; that span reads DVVT.

This sequence belongs to the fungal fruit body lectin family. As to quaternary structure, homotetramer.

In terms of biological role, lectin that recognizes O-linked galactose-beta-1,3-N-acetylgalactosamine, a disaccharide (Thomsen-Friedenreich antigen or T-disaccharide), present on cell surface glycoproteins. Can also bind chitin, N,N'-diacetylchitobiose, N-acetylgalactosamine and N-acetylglucosamine. Inhibits proliferation of colon, breast and liver cancer cell lines (in vitro). The polypeptide is Boletus edulis lectin (Boletus edulis (King bolete)).